A 144-amino-acid chain; its full sequence is Small ribosomal subunit protein bS6 (144 aa).

A disordered region spans residues 97–144; it reads DTEQSLIMKSKDEKGDKPERSERRRRDDEEGDAAPAATDTDGDNAEAA. A compositionally biased stretch (basic and acidic residues) spans 105 to 124; it reads KSKDEKGDKPERSERRRRDD.

This sequence belongs to the bacterial ribosomal protein bS6 family.

Functionally, binds together with bS18 to 16S ribosomal RNA. The chain is Small ribosomal subunit protein bS6 from Xanthomonas campestris pv. campestris (strain 8004).